Reading from the N-terminus, the 576-residue chain is Proline--tRNA ligase (576 aa).

Belongs to the class-II aminoacyl-tRNA synthetase family. ProS type 1 subfamily. In terms of assembly, homodimer.

Its subcellular location is the cytoplasm. The catalysed reaction is tRNA(Pro) + L-proline + ATP = L-prolyl-tRNA(Pro) + AMP + diphosphate. Its function is as follows. Catalyzes the attachment of proline to tRNA(Pro) in a two-step reaction: proline is first activated by ATP to form Pro-AMP and then transferred to the acceptor end of tRNA(Pro). As ProRS can inadvertently accommodate and process non-cognate amino acids such as alanine and cysteine, to avoid such errors it has two additional distinct editing activities against alanine. One activity is designated as 'pretransfer' editing and involves the tRNA(Pro)-independent hydrolysis of activated Ala-AMP. The other activity is designated 'posttransfer' editing and involves deacylation of mischarged Ala-tRNA(Pro). The misacylated Cys-tRNA(Pro) is not edited by ProRS. The protein is Proline--tRNA ligase of Bordetella petrii (strain ATCC BAA-461 / DSM 12804 / CCUG 43448).